The sequence spans 551 residues: Formate--tetrahydrofolate ligase (551 aa).

Position 65 to 72 (65 to 72 (TPAGEGKT)) interacts with ATP.

It belongs to the formate--tetrahydrofolate ligase family.

It catalyses the reaction (6S)-5,6,7,8-tetrahydrofolate + formate + ATP = (6R)-10-formyltetrahydrofolate + ADP + phosphate. The protein operates within one-carbon metabolism; tetrahydrofolate interconversion. This is Formate--tetrahydrofolate ligase from Thermosipho africanus (strain TCF52B).